A 155-amino-acid chain; its full sequence is Small ribosomal subunit protein uS7 (155 aa).

Belongs to the universal ribosomal protein uS7 family. In terms of assembly, part of the 30S ribosomal subunit. Contacts proteins S9 and S11.

Functionally, one of the primary rRNA binding proteins, it binds directly to 16S rRNA where it nucleates assembly of the head domain of the 30S subunit. Is located at the subunit interface close to the decoding center, probably blocks exit of the E-site tRNA. The sequence is that of Small ribosomal subunit protein uS7 from Kosmotoga olearia (strain ATCC BAA-1733 / DSM 21960 / TBF 19.5.1).